The chain runs to 351 residues: N-terminal EF-hand calcium-binding protein 1 (351 aa).

S4 carries the phosphoserine modification. EF-hand domains follow at residues 26–61 (KGMS…GVLS) and 60–95 (LSGE…HLGE). Positions 39, 41, 43, 45, and 50 each coordinate Ca(2+). A coiled-coil region spans residues 135 to 163 (LLKETLNQLQSLQNSLECAMETTEEQTRQ). A disordered region spans residues 180-203 (GKRSSRRVQRHNSFSPNSPQFNVS). Polar residues predominate over residues 190 to 202 (HNSFSPNSPQFNV). Residues S192 and S197 each carry the phosphoserine modification. The stretch at 209–275 (EEDNQWMTQI…EEFQLALKHY (67 aa)) forms a coiled coil. One can recognise an ABM domain in the interval 252–340 (MLVQRQMSVI…LETPELTSTM (89 aa)).

As to quaternary structure, interacts with STX1. May interact with CPNE6. In terms of tissue distribution, expressed in brain (at protein level).

The protein localises to the cytoplasm. In Homo sapiens (Human), this protein is N-terminal EF-hand calcium-binding protein 1 (NECAB1).